We begin with the raw amino-acid sequence, 131 residues long: MAKPTKGKAPRRSRRNISAGRAYVHASYNNTIVTITDLDGNSVAWSSGGTIGYKGSKKGTPYAAQLAAADAVKKAQTSFGMAAVDVIVRGSGSGREQAIRAIQASGIEVRSIMDDSPVPHNGCRPKKKFRA.

It belongs to the universal ribosomal protein uS11 family. As to quaternary structure, part of the 30S ribosomal subunit. Interacts with proteins S7 and S18. Binds to IF-3.

Located on the platform of the 30S subunit, it bridges several disparate RNA helices of the 16S rRNA. Forms part of the Shine-Dalgarno cleft in the 70S ribosome. The polypeptide is Small ribosomal subunit protein uS11 (Deinococcus radiodurans (strain ATCC 13939 / DSM 20539 / JCM 16871 / CCUG 27074 / LMG 4051 / NBRC 15346 / NCIMB 9279 / VKM B-1422 / R1)).